Here is a 391-residue protein sequence, read N- to C-terminus: NADH-quinone oxidoreductase subunit D (391 aa).

It belongs to the complex I 49 kDa subunit family. NDH-1 is composed of 14 different subunits. Subunits NuoB, C, D, E, F, and G constitute the peripheral sector of the complex.

It is found in the cell inner membrane. It carries out the reaction a quinone + NADH + 5 H(+)(in) = a quinol + NAD(+) + 4 H(+)(out). NDH-1 shuttles electrons from NADH, via FMN and iron-sulfur (Fe-S) centers, to quinones in the respiratory chain. The immediate electron acceptor for the enzyme in this species is believed to be ubiquinone. Couples the redox reaction to proton translocation (for every two electrons transferred, four hydrogen ions are translocated across the cytoplasmic membrane), and thus conserves the redox energy in a proton gradient. This Pelagibacter ubique (strain HTCC1062) protein is NADH-quinone oxidoreductase subunit D.